The sequence spans 606 residues: Gamma-aminobutyric acid receptor subunit beta (606 aa).

The signal sequence occupies residues 1–44 (MSDSKMDKLARMAPLPRTPLLTIWLAINMALIAQETGHKRIHTV). At 45 to 268 (QAATGGGSML…CEIQFVRSMG (224 aa)) the chain is on the extracellular side. A glycan (N-linked (GlcNAc...) asparagine) is linked at N58. A disulfide bridge connects residues C185 and C199. The N-linked (GlcNAc...) asparagine glycan is linked to N253. 3 helical membrane passes run 269–291 (YYLI…SFWL), 297–316 (PARV…LMSS), and 333–356 (YLGT…YMAK). At 357 to 568 (RIQMRKQRFM…LGITPSDIDK (212 aa)) the chain is on the cytoplasmic side. Disordered regions lie at residues 376 to 451 (KQQL…VSNR) and 482 to 542 (HDPK…AAVP). Positions 381–395 (GANQQQANPNPNANV) are enriched in low complexity. The segment covering 396 to 425 (GGPGGVGVGPGGPGGPGGGVNVGVGMGMGP) has biased composition (gly residues). A compositionally biased stretch (basic residues) spans 430 to 443 (GHGHHAHSHGHPHA). The segment covering 499 to 536 (GGRGGPQSHGPGPGQGGGPPGGGGGGGGGGGPPEGGGD) has biased composition (gly residues). Residues 569–590 (YSRIVFPVCFVCFNLMYWIIYL) traverse the membrane as a helical segment.

It belongs to the ligand-gated ion channel (TC 1.A.9) family. Gamma-aminobutyric acid receptor (TC 1.A.9.5) subfamily. In terms of assembly, forms oligomers. Interacts with Nlg4; the interaction mediates Rdl clustering. Interacts with Fbxl4; the interaction mediates Rdl degradation. In terms of tissue distribution, expressed in different parts of the brain: the mushroom bodies (alpha, alpha', beta, beta', gamma lobes and peduncles), the neurons projecting to the columnar-type neuron LC9 optic glomerulus, in interneurons connecting the paired olfactory lobes, antennal lobes, PDF-expressing small and large ventral lateral neurons (LNvs) of the circadian clock and lobula columnar neuron 11 (LC11) (at protein level). Expressed in all major ON pathway medulla neurons (Mi1, Tm3, Mi4, and Mi9) and in OFF pathway neurons (Tm1, Tm2, Tm4, and Tm9).

It is found in the cell membrane. It localises to the postsynaptic cell membrane. The protein localises to the cell projection. The protein resides in the dendrite. Its subcellular location is the axon. Its activity is regulated as follows. Activated by agonist muscimol. Insensitive to zinc, glycine, glutamate, and baclofen, loreclezole, to antagonist bicuculline, glycine-receptor antagonist strychnine, and nonselective GABA and glycine antagonist RU 5135. Insensitive to flunitrazepam, pentobarbitone or pregnane steroids such as 5alpha-pregnan-3alpha-ol-20-one. Inhibited by insecticides picrotoxin (PTX), cyclodiene dieldrin, TBPS and lindane. Inhibited by ivermectin, fipronil and pyrafluprole. Inhibited by insecticides picrotoxin (PTX). Gamma-aminobutyric acid (GABA) receptor voltage channel subunit. GABA, an inhibitory neurotransmitter, mediates neuronal inhibition by binding to the GABA receptor and opening an integral chloride channel. Together with glutamate receptor GluClalpha, plays an important role in the visual response by regulating the activity of ON/OFF-selective neurons. Plays a role in promoting sleep and sleep latency by regulating the activity of peptidergic PDF neurons. In large ventral lateral clock neurons, clustering is mediated by Nlg4 and protein levels undergo daily degradation in response to the circadian clock. In neurons in the mushroom bodies, has a role in odor memory acquisition where it inhibits appetitive and aversive olfactory learning, probably upstream of Adcy1/adenylate cyclase 1 and GTPase activating protein Nf1. In male-specific GABAergic neurons, plays a role in inhibiting male aggressive behavior during courtship. Its function is as follows. Gamma-aminobutyric acid (GABA) receptor voltage channel subunit. This chain is Gamma-aminobutyric acid receptor subunit beta (Rdl), found in Drosophila melanogaster (Fruit fly).